The following is a 271-amino-acid chain: Probable ribosomal RNA small subunit methyltransferase A (271 aa).

S-adenosyl-L-methionine is bound by residues Leu-12, Gly-37, Glu-58, Asp-83, and Asn-100.

This sequence belongs to the class I-like SAM-binding methyltransferase superfamily. rRNA adenine N(6)-methyltransferase family. RsmA subfamily.

The protein resides in the cytoplasm. Specifically dimethylates two adjacent adenosines in the loop of a conserved hairpin near the 3'-end of 16S rRNA in the 30S particle. May play a critical role in biogenesis of 30S subunits. The sequence is that of Probable ribosomal RNA small subunit methyltransferase A from Methanococcus aeolicus (strain ATCC BAA-1280 / DSM 17508 / OCM 812 / Nankai-3).